Consider the following 1992-residue polypeptide: E3 ubiquitin-protein ligase TRIP12 (1992 aa).

Residues 1 to 10 show a composition bias toward polar residues; the sequence is MSNRPNNNPG. 3 disordered regions span residues 1-398, 797-817, and 938-1080; these read MSNR…DDSE, QRKPNPLANSNTSGYSESKKD, and SLLT…ASKD. Ser2 is subject to N-acetylserine. At Ser12 the chain carries Phosphoserine. Positions 18-27 are enriched in polar residues; sequence RNTAGAQPQD. The span at 48 to 70 shows a compositional bias: basic and acidic residues; it reads DPDRANTSERQKTGQVPKKDNSR. Residues Ser77, Ser85, and Ser100 each carry the phosphoserine modification. Over residues 78 to 88 the composition is skewed to polar residues; the sequence is PDYNRTNSPSS. Residues 119–132 show a composition bias toward polar residues; sequence EQQLKSAQSPSTSK. 2 stretches are compositionally biased toward low complexity: residues 154–166 and 175–216; these read SSCVKSGSGSEST and PTKL…SSTV. Lys181 bears the N6-acetyllysine mark. Polar residues predominate over residues 280–290; the sequence is PGSSKSETSKP. Residues Ser310 and Ser312 each carry the phosphoserine modification. The segment covering 326 to 338 has biased composition (polar residues); that stretch reads QKTTGSCASTSRR. Basic and acidic residues predominate over residues 346 to 358; sequence GAAEARRQEKMAD. Composition is skewed to polar residues over residues 360–371 and 803–812; these read ESNQEAVNSSAA and LANSNTSGYS. Residues 749–836 form the WWE domain; that stretch reads MLKKGNAQNT…DPELAKSFIK (88 aa). Ser942 is subject to Phosphoserine. A compositionally biased stretch (low complexity) spans 948–973; that stretch reads TNGSGSMGSTTSVSSGTATAATHAAA. A phosphoserine mark is found at Ser991 and Ser997. Basic residues predominate over residues 1001 to 1014; the sequence is KRKRLPKRGPRRPK. Ser1016 carries the phosphoserine modification. Positions 1017–1026 are enriched in basic and acidic residues; sequence PPRDDDKVDN. Positions 1029 to 1040 are enriched in low complexity; sequence KSPTTTQSPKSS. Ser1030 is subject to Phosphoserine. The segment covering 1041–1062 has biased composition (polar residues); that stretch reads FLASLNPKTWGRLSTQSNSNNI. Phosphoserine is present on residues Ser1317, Ser1322, Ser1329, and Ser1376. Thr1377 carries the phosphothreonine modification. Disordered stretches follow at residues 1407-1433 and 1568-1587; these read SNKDCVGGKRGRAQTAPTKTSPRNAKK and TNPEINQSDSQDSRVAPRLD. The residue at position 1425 (Lys1425) is an N6-acetyllysine. Phosphoserine is present on Ser1427. Residues 1496 to 1570 form a K-box region; that stretch reads EIIPTSEFIN…AMQRLLDTNP (75 aa). The 108-residue stretch at 1885 to 1992 folds into the HECT domain; that stretch reads PDHGYTHDSR…REGQQSFHLS (108 aa). Cys1959 (glycyl thioester intermediate) is an active-site residue.

Belongs to the UPL family. K-HECT subfamily. In terms of assembly, interacts with MYC; leading to disrupt interaction with isoform p19ARF/ARF of CDKN2A. Interacts with TRADD; leading to disrupt interaction with isoform p19ARF/ARF of CDKN2A. Interacts with SMARCC1; leading to disrupt interaction with SMARCE1.

Its subcellular location is the nucleus. The protein resides in the nucleoplasm. The enzyme catalyses S-ubiquitinyl-[E2 ubiquitin-conjugating enzyme]-L-cysteine + [acceptor protein]-L-lysine = [E2 ubiquitin-conjugating enzyme]-L-cysteine + N(6)-ubiquitinyl-[acceptor protein]-L-lysine.. It functions in the pathway protein modification; protein ubiquitination. Its function is as follows. E3 ubiquitin-protein ligase involved in ubiquitin fusion degradation (UFD) pathway and regulation of DNA repair. Part of the ubiquitin fusion degradation (UFD) pathway, a process that mediates ubiquitination of protein at their N-terminus, regardless of the presence of lysine residues in target proteins. Acts as a key regulator of DNA damage response by acting as a suppressor of RNF168, an E3 ubiquitin-protein ligase that promotes accumulation of 'Lys-63'-linked histone H2A and H2AX at DNA damage sites, thereby acting as a guard against excessive spreading of ubiquitinated chromatin at damaged chromosomes. In normal cells, mediates ubiquitination and degradation of isoform p19ARF/ARF of CDKN2A, a lysine-less tumor suppressor required for p53/TP53 activation under oncogenic stress. In cancer cells, however, isoform p19ARF/ARF and TRIP12 are located in different cell compartments, preventing isoform p19ARF/ARF ubiquitination and degradation. Does not mediate ubiquitination of isoform p16-INK4a of CDKN2A. Also catalyzes ubiquitination of NAE1 and SMARCE1, leading to their degradation. Ubiquitination and degradation of target proteins is regulated by interaction with proteins such as MYC, TRADD or SMARCC1, which disrupt the interaction between TRIP12 and target proteins. Mediates ubiquitination of ASXL1: following binding to N(6)-methyladenosine methylated DNA, ASXL1 is ubiquitinated by TRIP12, leading to its degradation and subsequent inactivation of the PR-DUB complex. The polypeptide is E3 ubiquitin-protein ligase TRIP12 (TRIP12) (Homo sapiens (Human)).